The following is a 1019-amino-acid chain: Insulin-degrading enzyme (1019 aa).

Position 108 (His108) interacts with Zn(2+). Catalysis depends on Glu111, which acts as the Proton acceptor. Zn(2+)-binding residues include His112 and Glu189. Lys192 carries the post-translational modification N6-succinyllysine. Leu359–Gln363 provides a ligand contact to substrate. Position 429 (Arg429) interacts with ATP. An N6-succinyllysine modification is found at Lys697. A SlyX motif motif is present at residues Glu853–Tyr858. Asp895–Ser901 contacts ATP.

It belongs to the peptidase M16 family. In terms of assembly, homodimer. Can also form homotetramers. Requires Zn(2+) as cofactor. As to expression, detected in brain and liver (at protein level). Detected in liver.

Its subcellular location is the cytoplasm. The protein resides in the cytosol. It localises to the cell membrane. The protein localises to the secreted. It carries out the reaction Degradation of insulin, glucagon and other polypeptides. No action on proteins.. With respect to regulation, activated by ATP, other nucleotide triphosphates and small peptides. Inhibited by bacitracin. In terms of biological role, plays a role in the cellular breakdown of insulin, APP peptides, IAPP peptides, natriuretic peptides, glucagon, bradykinin, kallidin, and other peptides, and thereby plays a role in intercellular peptide signaling. Substrate binding induces important conformation changes, making it possible to bind and degrade larger substrates, such as insulin. Contributes to the regulation of peptide hormone signaling cascades and regulation of blood glucose homeostasis via its role in the degradation of insulin, glucagon and IAPP. Plays a role in the degradation and clearance of APP-derived amyloidogenic peptides that are secreted by neurons and microglia. Degrades the natriuretic peptides ANP, BNP and CNP, inactivating their ability to raise intracellular cGMP. Also degrades an aberrant frameshifted 40-residue form of NPPA (fsNPPA) which is associated with familial atrial fibrillation in heterozygous patients. Involved in antigen processing. Produces both the N terminus and the C terminus of MAGEA3-derived antigenic peptide (EVDPIGHLY) that is presented to cytotoxic T lymphocytes by MHC class I. The polypeptide is Insulin-degrading enzyme (Ide) (Mus musculus (Mouse)).